The chain runs to 365 residues: NAD(P)H-quinone oxidoreductase subunit 1, chloroplastic (365 aa).

Helical transmembrane passes span 27-47, 98-118, 129-149, 165-185, 203-223, 253-273, 302-322, and 345-365; these read VWIF…VLVI, FSIG…VIPF, IGIF…LMSG, AAQS…ISLL, FWGW…ISSL, FGLF…FVTI, IFGT…FLFI, and FLLP…LFSL.

Belongs to the complex I subunit 1 family. NDH is composed of at least 16 different subunits, 5 of which are encoded in the nucleus.

It is found in the plastid. It localises to the chloroplast thylakoid membrane. It carries out the reaction a plastoquinone + NADH + (n+1) H(+)(in) = a plastoquinol + NAD(+) + n H(+)(out). It catalyses the reaction a plastoquinone + NADPH + (n+1) H(+)(in) = a plastoquinol + NADP(+) + n H(+)(out). In terms of biological role, NDH shuttles electrons from NAD(P)H:plastoquinone, via FMN and iron-sulfur (Fe-S) centers, to quinones in the photosynthetic chain and possibly in a chloroplast respiratory chain. The immediate electron acceptor for the enzyme in this species is believed to be plastoquinone. Couples the redox reaction to proton translocation, and thus conserves the redox energy in a proton gradient. This chain is NAD(P)H-quinone oxidoreductase subunit 1, chloroplastic, found in Arabis hirsuta (Hairy rock-cress).